The chain runs to 73 residues: UPF0154 protein MYCGA5700 (73 aa).

Residues 5–25 form a helical membrane-spanning segment; the sequence is LALGLSIPLCLIVGAFVGYFV.

It belongs to the UPF0154 family.

It localises to the membrane. The sequence is that of UPF0154 protein MYCGA5700 from Mycoplasmoides gallisepticum (strain R(low / passage 15 / clone 2)) (Mycoplasma gallisepticum).